We begin with the raw amino-acid sequence, 621 residues long: Putative 5'-3' exonuclease R528 (621 aa).

It belongs to the 5'-3' exonuclease family.

The protein resides in the virion. The polypeptide is Putative 5'-3' exonuclease R528 (Acanthamoeba polyphaga mimivirus (APMV)).